Here is a 198-residue protein sequence, read N- to C-terminus: Recombination protein RecR (198 aa).

The C4-type zinc finger occupies 57-72; sequence CEKCNTFTEAQICEVC. Residues 80–175 enclose the Toprim domain; sequence TLLCVVETPA…AVTRLARGVP (96 aa).

The protein belongs to the RecR family.

In terms of biological role, may play a role in DNA repair. It seems to be involved in an RecBC-independent recombinational process of DNA repair. It may act with RecF and RecO. The protein is Recombination protein RecR of Paraburkholderia xenovorans (strain LB400).